The chain runs to 443 residues: Diels-Alderase poxQ (443 aa).

A signal peptide spans 1 to 23 (MARIPLEFLSITLPVLLLAYCLA). N-linked (GlcNAc...) asparagine glycosylation is found at Asn78, Asn97, and Asn145.

It belongs to the Diels-Alderase family.

It participates in secondary metabolite biosynthesis. In terms of biological role, diels-Alderase; part of the gene cluster that mediates the biosynthesis of oxaleimides, cytotoxic compounds containing an unusual disubstituted succinimide moiety. The first step of the pathway is provided by the HR-PKS poxF that serves in a new mode of collaborative biosynthesis with the PKS-NRPS poxE, by providing the olefin containing amino acid substrate via the synthesis of an ACP-bound dec-4-enoate. The cytochrome P450 monooxygenase poxM-catalyzed oxidation at the alpha-position creates the enzyme-bound 2-hydroxydec-4-enoyl-ACP thioester, which may be prone to spontaneous hydrolysis to yield 2-hydroxydec-4-enoic acid due to increased electrophilicity of the carbonyl. 2-hydroxydec-4-enoic acid can then be further oxidized by poxM to yield the alpha-ketoacid 2-oxodec-4-enoicacid, which is reductively aminated by the aminotransferase poxL to yield (S,E)-2-aminodec-4-enoic acid. The Hybrid PKS-NRPS synthetase poxE then performs condensation between the octaketide product of its PKS modules and the amino group of (S,E)-2-aminodec-4-enoic acid which is activated and incorporated by the adenylation domain. The resulting aminoacyl product can be cyclized by the Diels-Alderase PoxQ and reductively released by the reductive (R) domain of poxE to yield an aldehyde intermediate. The released aldehyde is then substrate for a Knoevenagel condensation by the hydrolyase poxO followed by an oxidation at the 5-position of the pyrrolidone ring. The presence of the olefin from the amino acid building block allows for migration of the substituted allyl group to occur. This allylic transposition reaction takes place in a conjugate addition, semipinacol-like fashion to yield a succinimide intermediate. Iterative two-electron oxidations of the C7 methyl of the succinimide intermediate to the carboxylic acid can be catalyzed by one of two remaining cytochrome P450 monooxygenasess poxC or poxD to yield oxaleimide A. Subsequent oxidation yields the maleimide scaffold oxaleimide I. Both oxaleimide A and oxaleimide I can undergo oxidative modifications in the decalin ring to yield the series of products oxaleimides B to H. The chain is Diels-Alderase poxQ from Penicillium oxalicum (strain 114-2 / CGMCC 5302) (Penicillium decumbens).